We begin with the raw amino-acid sequence, 239 residues long: MGQKINPLGFRLGTTQKHHSFWFAQPKNYSEGLQEDKKIRDCIKNYIQKNRKKGSNRKIESDSSSEVITHNRKMDSGSSSEVITHIEIQKEIDTIHVIIHIGFPNLLKKKGAIEELEKDLQKEINSVNQRFNISIEKVKEPYRQPNILAEYIAFQLKNRVSFRKAMKKAIELTKKADIRGVKVKIAGRLGGKEIARAESIKKGRLPLQTIRAKIDYCCYPIRTIYGVLGVKIWIFVDEE.

Residues 43 to 139 (IKNYIQKNRK…RFNISIEKVK (97 aa)) enclose the KH type-2 domain. The disordered stretch occupies residues 50-74 (NRKKGSNRKIESDSSSEVITHNRKM).

The protein belongs to the universal ribosomal protein uS3 family. Part of the 30S ribosomal subunit.

The protein resides in the plastid. It localises to the chloroplast. The polypeptide is Small ribosomal subunit protein uS3c (rps3) (Triticum aestivum (Wheat)).